The primary structure comprises 370 residues: UDP-N-acetylglucosamine--N-acetylmuramyl-(pentapeptide) pyrophosphoryl-undecaprenol N-acetylglucosamine transferase (370 aa).

Residues 10–12 (TGG), N126, S200, I255, and Q300 contribute to the UDP-N-acetyl-alpha-D-glucosamine site.

Belongs to the glycosyltransferase 28 family. MurG subfamily.

The protein localises to the cell membrane. It carries out the reaction Mur2Ac(oyl-L-Ala-gamma-D-Glu-L-Lys-D-Ala-D-Ala)-di-trans,octa-cis-undecaprenyl diphosphate + UDP-N-acetyl-alpha-D-glucosamine = beta-D-GlcNAc-(1-&gt;4)-Mur2Ac(oyl-L-Ala-gamma-D-Glu-L-Lys-D-Ala-D-Ala)-di-trans,octa-cis-undecaprenyl diphosphate + UDP + H(+). Its pathway is cell wall biogenesis; peptidoglycan biosynthesis. Functionally, cell wall formation. Catalyzes the transfer of a GlcNAc subunit on undecaprenyl-pyrophosphoryl-MurNAc-pentapeptide (lipid intermediate I) to form undecaprenyl-pyrophosphoryl-MurNAc-(pentapeptide)GlcNAc (lipid intermediate II). The chain is UDP-N-acetylglucosamine--N-acetylmuramyl-(pentapeptide) pyrophosphoryl-undecaprenol N-acetylglucosamine transferase from Lactobacillus gasseri (strain ATCC 33323 / DSM 20243 / BCRC 14619 / CIP 102991 / JCM 1131 / KCTC 3163 / NCIMB 11718 / NCTC 13722 / AM63).